The sequence spans 2225 residues: Multifunctional protein CAD (2225 aa).

N-acetylalanine is present on A2. The GATase (Glutamine amidotransferase) stretch occupies residues 2–365 (AALVLEDGSV…TVREAVAGNP (364 aa)). The L-glutamine site is built by S44, G222, and G224. One can recognise a Glutamine amidotransferase type-1 domain in the interval 177 to 363 (RICALDCGLK…LETVREAVAG (187 aa)). The Nucleophile; for GATase activity role is filled by C252. Positions 253, 256, 294, 296, and 297 each coordinate L-glutamine. Catalysis depends on for GATase activity residues H336 and E338. Residues 366–394 (GGQTVKERLVQRLCPPGLLIPGSGLPPPR) are linker. Positions 395 to 933 (KVLILGSGGL…NTHDLDFRTP (539 aa)) are CPSase A. Residues 395–1455 (KVLILGSGGL…APPLKVHVDC (1061 aa)) form a CPSase (Carbamoyl phosphate synthase) region. Residue T456 is modified to Phosphothreonine; by MAPK1. ATP contacts are provided by R515, R555, G561, G562, K592, E599, G625, I626, H627, Q668, and E682. The ATP-grasp 1 domain maps to 519-711 (AARMAEIGEH…LAYVAAKLAL (193 aa)). Mg(2+)-binding residues include Q668, E682, and N684. Q668, E682, and N684 together coordinate Mn(2+). K747 is subject to N6-acetyllysine. Residues 934–1455 (HVLVLGSGVY…APPLKVHVDC (522 aa)) form a CPSase B region. S1038 is modified (phosphoserine). In terms of domain architecture, ATP-grasp 2 spans 1052–1243 (SRLLDTIGIS…LVALATRIIM (192 aa)). 10 residues coordinate ATP: R1088, K1127, I1129, E1134, G1159, V1160, H1161, S1162, Q1202, and E1214. Mg(2+) is bound by residues Q1202, E1214, and N1216. Mn(2+) contacts are provided by Q1202, E1214, and N1216. The MGS-like domain occupies 1308-1462 (FKIPKKNILL…VDCMTSQKLV (155 aa)). The residue at position 1406 (S1406) is a Phosphoserine; by PKA. N6-acetyllysine is present on K1411. A DHOase (dihydroorotase) region spans residues 1456–1788 (MTSQKLVRLP…VKGTIRRVVL (333 aa)). Zn(2+) is bound by residues H1471 and H1473. (S)-dihydroorotate-binding residues include R1475 and N1505. 5 residues coordinate Zn(2+): K1556, H1590, C1613, H1614, and E1637. N6-carboxylysine is present on K1556. R1661 provides a ligand contact to (S)-dihydroorotate. D1686 provides a ligand contact to Zn(2+). Catalysis depends on D1686, which acts as the For DHOase activity. Residues H1690 and P1702 each coordinate (S)-dihydroorotate. Residues 1789-1917 (RGEVAYIDGQ…GLLHPQTSPL (129 aa)) are linker. Positions 1813–1911 (PQGAVPQPPP…QNLGSSGLLH (99 aa)) are disordered. Residues 1825 to 1834 (PATTEITTTP) are compositionally biased toward low complexity. S1859 is modified (phosphoserine; by RPS6KB1 and PKA). Residues 1866–1878 (EEPKEKPSRKVVE) show a composition bias toward basic and acidic residues. S1873 carries the phosphoserine; by PKC; in vitro modification. T1884 is modified (phosphothreonine). The span at 1899-1911 (ASPQNLGSSGLLH) shows a compositional bias: polar residues. Phosphoserine occurs at positions 1900 and 1938. Positions 1918–2225 (LHSLVGQHIL…ALLATVLGRF (308 aa)) are ATCase (Aspartate transcarbamylase). Carbamoyl phosphate contacts are provided by R1975 and T1976. L-aspartate is bound at residue K2003. The carbamoyl phosphate site is built by R2024, H2052, and Q2055. The L-aspartate site is built by R2085 and R2146. Positions 2185 and 2186 each coordinate carbamoyl phosphate.

It in the N-terminal section; belongs to the CarA family. The protein in the 2nd section; belongs to the CarB family. In the 3rd section; belongs to the metallo-dependent hydrolases superfamily. DHOase family. CAD subfamily. This sequence in the C-terminal section; belongs to the aspartate/ornithine carbamoyltransferase superfamily. ATCase family. As to quaternary structure, homohexamer. Interacts with CIPC. It depends on Zn(2+) as a cofactor. Mg(2+) serves as cofactor. Mn(2+) is required as a cofactor. Post-translationally, activated by MAP kinase (Erk1/2) phosphorylation just prior to the S phase of the cell cycle, when the demand for pyrimidine nucleotides is greatest, and down-regulated as the cells emerge from S phase by protein kinase A (PKA) phosphorylation. Phosphorylation at Ser-1859 by RPS6KB1 downstream of MTOR promotes oligomerization and stimulates dihydroorotase activity. Phosphorylation at Ser-1406 reduces sensitivity to feedback inhibition by UTP.

Its subcellular location is the cytoplasm. The protein resides in the nucleus. It catalyses the reaction hydrogencarbonate + L-glutamine + 2 ATP + H2O = carbamoyl phosphate + L-glutamate + 2 ADP + phosphate + 2 H(+). It carries out the reaction L-glutamine + H2O = L-glutamate + NH4(+). The catalysed reaction is hydrogencarbonate + NH4(+) + 2 ATP = carbamoyl phosphate + 2 ADP + phosphate + 2 H(+). The enzyme catalyses carbamoyl phosphate + L-aspartate = N-carbamoyl-L-aspartate + phosphate + H(+). It catalyses the reaction (S)-dihydroorotate + H2O = N-carbamoyl-L-aspartate + H(+). It participates in pyrimidine metabolism; UMP biosynthesis via de novo pathway; (S)-dihydroorotate from bicarbonate: step 1/3. The protein operates within pyrimidine metabolism; UMP biosynthesis via de novo pathway; (S)-dihydroorotate from bicarbonate: step 2/3. Its pathway is pyrimidine metabolism; UMP biosynthesis via de novo pathway; (S)-dihydroorotate from bicarbonate: step 3/3. Allosterically regulated and controlled by phosphorylation. 5-phosphoribose 1-diphosphate (PRPP) is an activator while UMP and UTP are inhibitors of the CPSase reaction. Its function is as follows. Multifunctional protein that encodes the first 3 enzymatic activities of the de novo pyrimidine pathway: carbamoylphosphate synthetase (CPSase; EC 6.3.5.5), aspartate transcarbamylase (ATCase; EC 2.1.3.2) and dihydroorotase (DHOase; EC 3.5.2.3). The CPSase-function is accomplished in 2 steps, by a glutamine-dependent amidotransferase activity (GATase) that binds and cleaves glutamine to produce ammonia, followed by an ammonium-dependent carbamoyl phosphate synthetase, which reacts with the ammonia, hydrogencarbonate and ATP to form carbamoyl phosphate. The endogenously produced carbamoyl phosphate is sequestered and channeled to the ATCase active site. ATCase then catalyzes the formation of carbamoyl-L-aspartate from L-aspartate and carbamoyl phosphate. In the last step, DHOase catalyzes the cyclization of carbamoyl aspartate to dihydroorotate. The sequence is that of Multifunctional protein CAD (CAD) from Mesocricetus auratus (Golden hamster).